The sequence spans 253 residues: Ubiquinone biosynthesis O-methyltransferase (253 aa).

R47, G78, D99, and M141 together coordinate S-adenosyl-L-methionine.

The protein belongs to the methyltransferase superfamily. UbiG/COQ3 family.

It carries out the reaction a 3-demethylubiquinol + S-adenosyl-L-methionine = a ubiquinol + S-adenosyl-L-homocysteine + H(+). It catalyses the reaction a 3-(all-trans-polyprenyl)benzene-1,2-diol + S-adenosyl-L-methionine = a 2-methoxy-6-(all-trans-polyprenyl)phenol + S-adenosyl-L-homocysteine + H(+). The protein operates within cofactor biosynthesis; ubiquinone biosynthesis. Its function is as follows. O-methyltransferase that catalyzes the 2 O-methylation steps in the ubiquinone biosynthetic pathway. This is Ubiquinone biosynthesis O-methyltransferase from Rhodopseudomonas palustris (strain ATCC BAA-98 / CGA009).